The sequence spans 415 residues: Thyroxine-binding globulin (415 aa).

An N-terminal signal peptide occupies residues 1–20 (MSPFLYLVLLVLGLHATIHC). Residues N36, N99, N165, and N253 are each glycosylated (N-linked (GlcNAc...) asparagine). Residues N293 and R398 each coordinate thyroxine.

It belongs to the serpin family.

It localises to the secreted. Major thyroid hormone transport protein in serum. The sequence is that of Thyroxine-binding globulin (SERPINA7) from Pan troglodytes (Chimpanzee).